Consider the following 357-residue polypeptide: Chorismate synthase (357 aa).

NADP(+)-binding residues include Arg-48 and Arg-54. Residues Arg-125 to Ser-127, Asn-238 to Ala-239, Gly-278, Lys-293 to Ser-297, and Arg-319 each bind FMN.

This sequence belongs to the chorismate synthase family. In terms of assembly, homotetramer. FMNH2 serves as cofactor.

The enzyme catalyses 5-O-(1-carboxyvinyl)-3-phosphoshikimate = chorismate + phosphate. The protein operates within metabolic intermediate biosynthesis; chorismate biosynthesis; chorismate from D-erythrose 4-phosphate and phosphoenolpyruvate: step 7/7. Catalyzes the anti-1,4-elimination of the C-3 phosphate and the C-6 proR hydrogen from 5-enolpyruvylshikimate-3-phosphate (EPSP) to yield chorismate, which is the branch point compound that serves as the starting substrate for the three terminal pathways of aromatic amino acid biosynthesis. This reaction introduces a second double bond into the aromatic ring system. The sequence is that of Chorismate synthase from Blochmanniella floridana.